The sequence spans 479 residues: Small ribosomal subunit protein bS1 (479 aa).

S1 motif domains are found at residues 36-105 (GDIV…LSKK), 123-188 (DEAV…LSRR), 209-277 (GAIR…LSLK), and 294-363 (GQIV…LSLK). The segment at 429–466 (TAQMEKFAAAEAEAANAPVSNGSSRSEESSGGTLASDA) is disordered. Positions 437-460 (AAEAEAANAPVSNGSSRSEESSGG) are enriched in low complexity.

It belongs to the bacterial ribosomal protein bS1 family. Binds uncharacterized protein MSMEG_2731/MSMEI_2664.

Its function is as follows. Binds mRNA, facilitating recognition of most mRNAs by the 30S ribosomal subunit during translation initiation. Plays a role in trans-translation; binds tmRNA (the product of the ssrA gene). Binds very poorly to pyrazinoic acid (POA), the active form of the prodrug pyrazinamide (PZA); POA does not disrupt trans-translation in this organism. M.smegmatis is resistant to the antibiotic PZA. In trans-translation Ala-aminoacylated transfer-messenger RNA (tmRNA, product of the ssrA gene; the 2 termini fold to resemble tRNA(Ala) while it encodes a short internal open reading frame (the tag peptide)) acts like a tRNA, entering the A-site of the ribosome and displacing the stalled mRNA (which is subsequently degraded). The ribosome then switches to translate the ORF on the tmRNA, the nascent peptide is terminated with the 'tag peptide' encoded by the tmRNA and thus targeted for degradation. This Mycolicibacterium smegmatis (strain ATCC 700084 / mc(2)155) (Mycobacterium smegmatis) protein is Small ribosomal subunit protein bS1 (rpsA).